The primary structure comprises 181 residues: Small ribosomal subunit protein cS23 (181 aa).

Positions 1–40 (MLPMSVHPATTPALASRPRVSLPRPSTPSSSSSLVHLKSR) are disordered. Residues 14-36 (LASRPRVSLPRPSTPSSSSSLVH) are compositionally biased toward low complexity.

Belongs to the chloroplast-specific ribosomal protein cS23 family. As to quaternary structure, part of the 30S ribosomal subunit.

It is found in the plastid. It localises to the chloroplast. Functionally, component of the chloroplast ribosome (chloro-ribosome), a dedicated translation machinery responsible for the synthesis of chloroplast genome-encoded proteins, including proteins of the transcription and translation machinery and components of the photosynthetic apparatus. This Hordeum vulgare (Barley) protein is Small ribosomal subunit protein cS23 (PSRP3).